A 49-amino-acid chain; its full sequence is MRVNVTLACTECGDRNYITTKNKRNNPERVEMKKFCSRENKQTLHRETK.

This sequence belongs to the bacterial ribosomal protein bL33 family.

The chain is Large ribosomal subunit protein bL33A from Staphylococcus aureus (strain COL).